The primary structure comprises 736 residues: uncharacterized protein (736 aa).

ABC transporter domains lie at 183–459 and 518–734; these read IKID…KQME and LQMS…TMTI. ATP-binding positions include 215 to 222 and 551 to 558; these read GRNGIGKS and GPNGAGKS.

The protein belongs to the ABC transporter superfamily.

Its subcellular location is the cytoplasm. This is an uncharacterized protein from Schizosaccharomyces pombe (strain 972 / ATCC 24843) (Fission yeast).